A 247-amino-acid polypeptide reads, in one-letter code: ATP synthase subunit a (247 aa).

The next 6 helical transmembrane spans lie at 24–44 (IAFT…SLLM), 82–102 (FFPF…VGIV), 112–132 (IIVT…YGFY), 141–161 (LFVP…IEVI), 194–214 (MLGA…ALVV), and 219–239 (LELL…CIYI).

This sequence belongs to the ATPase A chain family. F-type ATPases have 2 components, CF(1) - the catalytic core - and CF(0) - the membrane proton channel. CF(1) has five subunits: alpha(3), beta(3), gamma(1), delta(1), epsilon(1). CF(0) has three main subunits: a(1), b(2) and c(9-12). The alpha and beta chains form an alternating ring which encloses part of the gamma chain. CF(1) is attached to CF(0) by a central stalk formed by the gamma and epsilon chains, while a peripheral stalk is formed by the delta and b chains.

The protein resides in the cell inner membrane. Key component of the proton channel; it plays a direct role in the translocation of protons across the membrane. The polypeptide is ATP synthase subunit a (Nitrobacter hamburgensis (strain DSM 10229 / NCIMB 13809 / X14)).